Consider the following 675-residue polypeptide: G-protein-signaling modulator 1 (675 aa).

Residues 1-509 form a mediates association with membranes region; the sequence is MAGPAPPVAD…DLLTKFQSSR (509 aa). TPR repeat units follow at residues 28 to 61, 66 to 99, 106 to 139, 146 to 181, 183 to 202, 209 to 242, 249 to 282, 289 to 322, and 329 to 362; these read CLEL…GTED, SAIY…ARTI, AKAS…AQEQ, ARAL…PPDV, ETLC…VKEL, GRAY…AKEF, RRAY…SRQL, AQAC…AQEL, and GRAC…SQEI. An interaction with STK11/LKB1 region spans residues 364-487; the sequence is DRHGELTARM…VRVHVPRTSI (124 aa). The tract at residues 391–412 is disordered; it reads SEKPDLAGYEAQGARPKRTQRL. Serine 413 carries the phosphoserine modification. Arginine 421 is subject to Omega-N-methylarginine. Over residues 424 to 442 the composition is skewed to basic and acidic residues; that stretch reads LEREQNGDSHHSGDWRGPS. The disordered stretch occupies residues 424 to 492; it reads LEREQNGDSH…PRTSIPRAPS (69 aa). Serine 445, serine 469, serine 471, serine 492, and serine 493 each carry phosphoserine. The span at 454–469 shows a compositional bias: basic and acidic residues; the sequence is KYQEGPDAERRPREGS. In terms of domain architecture, GoLoco 1 spans 495 to 517; sequence EECFFDLLTKFQSSRMDDQRCPL. A phosphoserine mark is found at serine 545 and serine 569. GoLoco domains lie at 548 to 570, 596 to 618, and 630 to 652; these read TEEF…RASV, GDDF…RCPP, and DEDF…RVDL. Disordered stretches follow at residues 610 to 630 and 644 to 675; these read RIDD…TMPD and RMDE…PGAS.

Belongs to the GPSM family. As to quaternary structure, interacts with GNAI1, GNAI2 and GNAI3 preferentially in their GDP-bound state. May also interact with GNAO1. Interacts with STK11/LKB1 and MACF1. Interacts with INSC/inscuteable and FRMPD1. Post-translationally, phosphorylation regulates interaction with G(i/o) alpha. As to expression, expressed in intestinal cells.

The protein resides in the cytoplasm. It is found in the cytosol. Its subcellular location is the endoplasmic reticulum membrane. The protein localises to the golgi apparatus membrane. It localises to the cell membrane. Its function is as follows. Guanine nucleotide dissociation inhibitor (GDI) which functions as a receptor-independent activator of heterotrimeric G-protein signaling. Keeps G(i/o) alpha subunit in its GDP-bound form thus uncoupling heterotrimeric G-proteins signaling from G protein-coupled receptors. Controls spindle orientation and asymmetric cell fate of cerebral cortical progenitors. May also be involved in macroautophagy in intestinal cells. May play a role in drug addiction. The polypeptide is G-protein-signaling modulator 1 (GPSM1) (Homo sapiens (Human)).